Reading from the N-terminus, the 562-residue chain is Dihydroxy-acid dehydratase (562 aa).

D80 contacts Mg(2+). [2Fe-2S] cluster is bound at residue C121. Residues D122 and K123 each coordinate Mg(2+). K123 is subject to N6-carboxylysine. [2Fe-2S] cluster is bound at residue C194. E446 contacts Mg(2+). Catalysis depends on S472, which acts as the Proton acceptor.

It belongs to the IlvD/Edd family. In terms of assembly, homodimer. [2Fe-2S] cluster serves as cofactor. Mg(2+) is required as a cofactor.

It catalyses the reaction (2R)-2,3-dihydroxy-3-methylbutanoate = 3-methyl-2-oxobutanoate + H2O. The enzyme catalyses (2R,3R)-2,3-dihydroxy-3-methylpentanoate = (S)-3-methyl-2-oxopentanoate + H2O. It participates in amino-acid biosynthesis; L-isoleucine biosynthesis; L-isoleucine from 2-oxobutanoate: step 3/4. Its pathway is amino-acid biosynthesis; L-valine biosynthesis; L-valine from pyruvate: step 3/4. Functionally, functions in the biosynthesis of branched-chain amino acids. Catalyzes the dehydration of (2R,3R)-2,3-dihydroxy-3-methylpentanoate (2,3-dihydroxy-3-methylvalerate) into 2-oxo-3-methylpentanoate (2-oxo-3-methylvalerate) and of (2R)-2,3-dihydroxy-3-methylbutanoate (2,3-dihydroxyisovalerate) into 2-oxo-3-methylbutanoate (2-oxoisovalerate), the penultimate precursor to L-isoleucine and L-valine, respectively. The chain is Dihydroxy-acid dehydratase from Staphylococcus aureus (strain COL).